Here is a 130-residue protein sequence, read N- to C-terminus: Small ribosomal subunit protein uS11 (130 aa).

This sequence belongs to the universal ribosomal protein uS11 family. As to quaternary structure, part of the 30S ribosomal subunit. Interacts with proteins S7 and S18. Binds to IF-3.

Located on the platform of the 30S subunit, it bridges several disparate RNA helices of the 16S rRNA. Forms part of the Shine-Dalgarno cleft in the 70S ribosome. This Ruegeria pomeroyi (strain ATCC 700808 / DSM 15171 / DSS-3) (Silicibacter pomeroyi) protein is Small ribosomal subunit protein uS11.